A 116-amino-acid polypeptide reads, in one-letter code: uncharacterized protein (116 aa).

The helical transmembrane segment at 52 to 72 (VFCSANSVPLYLLLLTSALHF) threads the bilayer.

It localises to the mitochondrion membrane. This is an uncharacterized protein from Arabidopsis thaliana (Mouse-ear cress).